The following is a 685-amino-acid chain: Probable glucan endo-1,3-beta-glucosidase btgC (685 aa).

3 disordered regions span residues 1-96, 119-168, and 180-202; these read MSGP…NLGP, GIDA…RDSY, and PAGQ…SPYQ. The Cytoplasmic portion of the chain corresponds to 1-312; that stretch reads MSGPHRSFSF…PTPGGGSRKR (312 aa). Polar residues-rich tracts occupy residues 47–61 and 73–90; these read SARS…SSGF and GQNS…TTPG. A helical; Signal-anchor for type II membrane protein transmembrane segment spans residues 313–333; the sequence is GWIVGLALAFIVVGAIVGGAV. Residues 334–685 are Extracellular-facing; it reads GGTLGNRENE…IPDCGGKTAA (352 aa). Residues 335-369 form a disordered region; the sequence is GTLGNRENEAPDTTKSASSDTESNGDLNKDSSEIK. Positions 345-360 are enriched in polar residues; sequence PDTTKSASSDTESNGD. N-linked (GlcNAc...) asparagine glycans are attached at residues N405, N428, and N456. E488 acts as the Proton donor in catalysis. E587 functions as the Nucleophile in the catalytic mechanism. An N-linked (GlcNAc...) asparagine glycan is attached at N632.

The protein belongs to the glycosyl hydrolase 17 family.

Its subcellular location is the cell membrane. The catalysed reaction is Hydrolysis of (1-&gt;3)-beta-D-glucosidic linkages in (1-&gt;3)-beta-D-glucans.. In terms of biological role, glucanases play a role in cell expansion during growth, in cell-cell fusion during mating, and in spore release during sporulation. This enzyme may be involved in beta-glucan degradation. Active on laminarin and lichenan. This is Probable glucan endo-1,3-beta-glucosidase btgC (btgC) from Aspergillus oryzae (strain ATCC 42149 / RIB 40) (Yellow koji mold).